We begin with the raw amino-acid sequence, 1131 residues long: Protein TOPLESS (1131 aa).

The region spanning 4–36 (LSRELVFLILQFLDEEKFKETVHKLEQESGFFF) is the LisH domain. The CTLH domain occupies 34 to 92 (FFFNMKYFEDEVHNGNWDEVEKYLSGFTKVDDNRYSMKIFFEIRKQKYLEALDKHDRPK). Residue serine 214 is modified to Phosphoserine. Residues 286 to 305 (TPPTNASLDYPSADSEHVSK) form a disordered region. WD repeat units follow at residues 353 to 393 (SQGS…RLVQ), 415 to 454 (EPVVSVNRVIWSPDGSLFGVAYSRHIVQLYSYHGGEDMRQ), 460 to 501 (AHVG…KRHT), 504 to 545 (GHEA…SRVD), 548 to 591 (APGR…VKRT), 595 to 634 (FHKRSLGVVQFDTTKNRYLAAGDDFSIKFWDMDAVQLLTA), 639 to 678 (GGLQASPRIRFNKEGSLLAVSGNENVIKIMANSDGLRLLH), 710 to 756 (DRSA…EPSQ), 766 to 805 (LRVAKISRLIFTNSGNAILALASNAIHLLWKWQRNERNAT), 833 to 871 (NPEEAVPCFALSKNDSYVMSASGGKISLFNMMTFKTMAT), 874 to 914 (PPPP…VKSK), 917 to 956 (GHSKRITGLAFSNVLNVLVSSGADAQLCVWNTDGWEKQRS), 967 to 1005 (NSAPSDTRVQFHQDQAHFLVVHETQLAIYETTKLECMKQ), 1010 to 1049 (ESLAPITHATFSCDSQLVYASFMDATVCVFSSANLRLRCR), and 1060 to 1102 (LSNS…GKWG). The interval 1100 to 1131 (KWGVAPPAENGSASGAPTAPSVGASASDQPQR) is disordered.

In terms of assembly, tetramer. Homodimer. Interacts (via the LisH domain) with WUS (via the C-terminal domain). Interacts with NINJA/AFPH2. Interacts with IAA1; IAA2; IAA3; IAA4; IAA6; IAA8; IAA9; IAA11; IAA13; IAA14; IAA17; IAA18; IAA26; IAA27 and IAA28. Interacts (via the LisH domain) with IAA12/BDL (via domain I). Can form a complex with IAA12 and ARF5. Interacts with AP2 (via EAR motif) and HDA19. Interacts with TIFY5A/JAZ8 (via EAR motif). Interacts with SPEAR3/TIE1. Interacts with SPL (via EAR motif). Interacts with ZAT2 and ZAT3 (via the EAR motif). Interacts with JAZ13 (via EAR motif). Interacts with GIR1 and GIR2. As to expression, expressed in embryo and in extraembryonic tissues. Expressed in inflorescences, flowers, floral meristems, developing anthers and ovules. Detected in the vascular tissues, shoot apical meristem, cotyledons and young leaves. Expressed ubiquitously in the pistils, stamens and pollens.

The protein localises to the nucleus. Functionally, transcriptional corepressor. May repress the expression of root-promoting genes in the top half of the embryo to allow proper differentiation of the shoot pole during the transition stage of embryogenesis. Regulates the expression of PLT1 and PLT2. Negative regulator of jasmonate responses. Negative regulator of auxin responses. Negative regulator of multiple floral organ identity genes. Required for ovule development. This chain is Protein TOPLESS (TPL), found in Arabidopsis thaliana (Mouse-ear cress).